A 246-amino-acid chain; its full sequence is Osmotin-like protein OSML13 (246 aa).

A signal peptide spans Met-1–Ala-21. Cystine bridges form between Cys-30–Cys-225, Cys-72–Cys-82, Cys-87–Cys-93, Cys-141–Cys-213, Cys-146–Cys-196, Cys-154–Cys-164, Cys-168–Cys-177, and Cys-178–Cys-183.

Belongs to the thaumatin family.

The polypeptide is Osmotin-like protein OSML13 (Solanum commersonii (Commerson's wild potato)).